Consider the following 85-residue polypeptide: MSSGGLLLLLGLLTLCAELTPVSSRKRHPDCDKPPDTKICQTVVRAFYYKPSAKRCVQFRYGGCNGNGNHFKSDHLCRCECLEYS.

An N-terminal signal peptide occupies residues 1 to 24 (MSSGGLLLLLGLLTLCAELTPVSS). The 51-residue stretch at 31–81 (CDKPPDTKICQTVVRAFYYKPSAKRCVQFRYGGCNGNGNHFKSDHLCRCEC) folds into the BPTI/Kunitz inhibitor domain. 3 cysteine pairs are disulfide-bonded: C31-C81, C40-C64, and C56-C77.

The protein belongs to the venom Kunitz-type family. As to quaternary structure, heterodimer; disulfide-linked. The A chains have phospholipase A2 activity and the B chains show homology with the basic protease inhibitors. In terms of tissue distribution, expressed by the venom gland.

Its subcellular location is the secreted. In terms of biological role, beta-bungarotoxins are presynaptic neurotoxins of the venom. The B chain is homologous to venom basic protease inhibitors but has no protease inhibitor activity and blocks voltage-gated potassium channels (Kv). This Bungarus multicinctus (Many-banded krait) protein is Kunitz-type serine protease inhibitor homolog beta-bungarotoxin B4 chain.